The sequence spans 200 residues: Molybdenum cofactor guanylyltransferase (200 aa).

GTP is bound by residues 10 to 12 (LAG), K23, N51, D69, and D99. D99 contacts Mg(2+).

The protein belongs to the MobA family. In terms of assembly, monomer. Mg(2+) serves as cofactor.

Its subcellular location is the cytoplasm. The enzyme catalyses Mo-molybdopterin + GTP + H(+) = Mo-molybdopterin guanine dinucleotide + diphosphate. Functionally, transfers a GMP moiety from GTP to Mo-molybdopterin (Mo-MPT) cofactor (Moco or molybdenum cofactor) to form Mo-molybdopterin guanine dinucleotide (Mo-MGD) cofactor. This is Molybdenum cofactor guanylyltransferase from Shewanella halifaxensis (strain HAW-EB4).